A 263-amino-acid polypeptide reads, in one-letter code: Tetraspanin-7 (263 aa).

Topologically, residues 1 to 7 (MVQCSNN) are cytoplasmic. The helical transmembrane segment at 8–28 (LLGILNFFTFLLSIPILSAGI) threads the bilayer. At 29–45 (WLGKNAATECERFLDKP) the chain is on the extracellular side. Residues 46-66 (MVVLGIFLMFVSIAGLVGACC) traverse the membrane as a helical segment. The Cytoplasmic segment spans residues 67-75 (RVSCLLWLY). The chain crosses the membrane as a helical span at residues 76 to 96 (LFAMFLLILLGFCFTIFAFAV). Topologically, residues 97–234 (TNRGAGEVIS…NIKNSWKKVA (138 aa)) are extracellular. Residue Asn180 is glycosylated (N-linked (GlcNAc...) asparagine). Residues 235-255 (KVNIVFLIFLIIVYSVGCCAF) form a helical membrane-spanning segment. At 256 to 263 (RNNRKRSW) the chain is on the cytoplasmic side.

It belongs to the tetraspanin (TM4SF) family.

The protein resides in the membrane. In terms of biological role, may be involved in the regulation of cell differentiation. The sequence is that of Tetraspanin-7 (TET7) from Arabidopsis thaliana (Mouse-ear cress).